The primary structure comprises 430 residues: 3-phosphoshikimate 1-carboxyvinyltransferase (430 aa).

3 residues coordinate 3-phosphoshikimate: Lys-21, Ser-22, and Arg-26. Position 21 (Lys-21) interacts with phosphoenolpyruvate. Gly-92 and Arg-120 together coordinate phosphoenolpyruvate. 3-phosphoshikimate-binding residues include Ser-165, Ser-166, Gln-167, Ser-193, Asp-314, and Lys-341. Gln-167 contacts phosphoenolpyruvate. Asp-314 (proton acceptor) is an active-site residue. Residues Arg-345, Arg-386, and Lys-411 each contribute to the phosphoenolpyruvate site.

Belongs to the EPSP synthase family. In terms of assembly, monomer.

The protein resides in the cytoplasm. It carries out the reaction 3-phosphoshikimate + phosphoenolpyruvate = 5-O-(1-carboxyvinyl)-3-phosphoshikimate + phosphate. The protein operates within metabolic intermediate biosynthesis; chorismate biosynthesis. Functionally, catalyzes the transfer of the enolpyruvyl moiety of phosphoenolpyruvate (PEP) to the 5-hydroxyl of shikimate-3-phosphate (S3P) to produce enolpyruvyl shikimate-3-phosphate and inorganic phosphate. The chain is 3-phosphoshikimate 1-carboxyvinyltransferase from Methanospirillum hungatei JF-1 (strain ATCC 27890 / DSM 864 / NBRC 100397 / JF-1).